The chain runs to 387 residues: Protein RecA (387 aa).

Position 80–87 (G80–T87) interacts with ATP. Residues L348–D387 form a disordered region. Acidic residues-rich tracts occupy residues D349–T360 and T378–D387.

This sequence belongs to the RecA family.

It is found in the cytoplasm. Functionally, can catalyze the hydrolysis of ATP in the presence of single-stranded DNA, the ATP-dependent uptake of single-stranded DNA by duplex DNA, and the ATP-dependent hybridization of homologous single-stranded DNAs. It interacts with LexA causing its activation and leading to its autocatalytic cleavage. The polypeptide is Protein RecA (Lactococcus lactis subsp. cremoris (strain MG1363)).